Reading from the N-terminus, the 525-residue chain is Erythropoietin receptor (525 aa).

Positions 1-32 (MGAPSSLLFSTAHWRTVPFLLAFWVLLSTGTA) are cleaved as a signal peptide. Residues 33-249 (EDPTMTPEFL…TIATIIDLRL (217 aa)) lie on the Extracellular side of the membrane. Cysteine 58 and cysteine 68 are disulfide-bonded. N-linked (GlcNAc...) asparagine glycosylation is found at asparagine 77, asparagine 100, asparagine 149, and asparagine 185. An intrachain disulfide couples cysteine 91 to cysteine 107. Positions 146–246 (PPLNVTVKEK…APITIATIID (101 aa)) constitute a Fibronectin type-III domain. A WSXWS motif motif is present at residues 232-236 (WSDWT). The helical transmembrane segment at 250–270 (LLLLSIAIFVALIAGVGVYIF) threads the bilayer. Residues 271–525 (MRHGMYLKHK…NFLAPIYSQS (255 aa)) lie on the Cytoplasmic side of the membrane. Residues 281–289 (VWPQVPTPE) carry the Box 1 motif motif. Disordered stretches follow at residues 434–459 (APRM…QSIP) and 492–513 (LDMS…QNSP). Positions 447–459 (ENSVSSDGKQSIP) are enriched in polar residues. The ITIM motif signature appears at 487–492 (LKYAYL).

It belongs to the type I cytokine receptor family. Type 1 subfamily. As to expression, expressed in the ventral blood island from stage 28 through to stage 36. Expressed in the circulating blood by stage 40. In the adult, highly expressed in peripheral blood cells including immature erythrocytes and basophils, and moderately expressed in the hematopoietic organs: liver, kidney and spleen. Expressed at a low level in adult brain.

It localises to the cell membrane. Receptor for erythropoietin. Mediates erythropoietin-induced erythroblast proliferation and differentiation. This is Erythropoietin receptor from Xenopus laevis (African clawed frog).